The sequence spans 291 residues: Pyridoxal 5'-phosphate synthase subunit PdxS (291 aa).

Aspartate 23 is a D-ribose 5-phosphate binding site. Catalysis depends on lysine 80, which acts as the Schiff-base intermediate with D-ribose 5-phosphate. D-ribose 5-phosphate is bound at residue glycine 152. Arginine 164 serves as a coordination point for D-glyceraldehyde 3-phosphate. D-ribose 5-phosphate-binding positions include glycine 213 and 234 to 235 (GS).

It belongs to the PdxS/SNZ family. In terms of assembly, in the presence of PdxT, forms a dodecamer of heterodimers.

The catalysed reaction is aldehydo-D-ribose 5-phosphate + D-glyceraldehyde 3-phosphate + L-glutamine = pyridoxal 5'-phosphate + L-glutamate + phosphate + 3 H2O + H(+). It functions in the pathway cofactor biosynthesis; pyridoxal 5'-phosphate biosynthesis. Its function is as follows. Catalyzes the formation of pyridoxal 5'-phosphate from ribose 5-phosphate (RBP), glyceraldehyde 3-phosphate (G3P) and ammonia. The ammonia is provided by the PdxT subunit. Can also use ribulose 5-phosphate and dihydroxyacetone phosphate as substrates, resulting from enzyme-catalyzed isomerization of RBP and G3P, respectively. This Methanocorpusculum labreanum (strain ATCC 43576 / DSM 4855 / Z) protein is Pyridoxal 5'-phosphate synthase subunit PdxS.